A 360-amino-acid polypeptide reads, in one-letter code: S-adenosylmethionine:tRNA ribosyltransferase-isomerase (360 aa).

Belongs to the QueA family. As to quaternary structure, monomer.

The protein resides in the cytoplasm. It catalyses the reaction 7-aminomethyl-7-carbaguanosine(34) in tRNA + S-adenosyl-L-methionine = epoxyqueuosine(34) in tRNA + adenine + L-methionine + 2 H(+). Its pathway is tRNA modification; tRNA-queuosine biosynthesis. Its function is as follows. Transfers and isomerizes the ribose moiety from AdoMet to the 7-aminomethyl group of 7-deazaguanine (preQ1-tRNA) to give epoxyqueuosine (oQ-tRNA). The protein is S-adenosylmethionine:tRNA ribosyltransferase-isomerase of Rhodopseudomonas palustris (strain TIE-1).